The primary structure comprises 316 residues: tRNA dimethylallyltransferase (316 aa).

Position 17–24 (17–24) interacts with ATP; that stretch reads GPTASGKT. 19-24 provides a ligand contact to substrate; that stretch reads TASGKT. Interaction with substrate tRNA regions lie at residues 42–45, 166–170, 247–252, and 280–287; these read DSAL, QRLSR, RCVGYR, and KRQITWLR.

Belongs to the IPP transferase family. Monomer. It depends on Mg(2+) as a cofactor.

It catalyses the reaction adenosine(37) in tRNA + dimethylallyl diphosphate = N(6)-dimethylallyladenosine(37) in tRNA + diphosphate. Its function is as follows. Catalyzes the transfer of a dimethylallyl group onto the adenine at position 37 in tRNAs that read codons beginning with uridine, leading to the formation of N6-(dimethylallyl)adenosine (i(6)A). In Shigella dysenteriae serotype 1 (strain Sd197), this protein is tRNA dimethylallyltransferase.